The chain runs to 423 residues: Glutamyl-tRNA reductase 2 (423 aa).

Substrate-binding positions include 48–51, S103, 108–110, and Q114; these read TCYR and EPQ. The active-site Nucleophile is the C49. 183-188 serves as a coordination point for NADP(+); the sequence is GAGEMA.

Belongs to the glutamyl-tRNA reductase family. Homodimer.

It catalyses the reaction (S)-4-amino-5-oxopentanoate + tRNA(Glu) + NADP(+) = L-glutamyl-tRNA(Glu) + NADPH + H(+). Its pathway is porphyrin-containing compound metabolism; protoporphyrin-IX biosynthesis; 5-aminolevulinate from L-glutamyl-tRNA(Glu): step 1/2. Functionally, catalyzes the NADPH-dependent reduction of glutamyl-tRNA(Glu) to glutamate 1-semialdehyde (GSA). The chain is Glutamyl-tRNA reductase 2 from Anaeromyxobacter sp. (strain Fw109-5).